The chain runs to 455 residues: Bifunctional protein GlmU (455 aa).

The pyrophosphorylase stretch occupies residues 1–228; sequence MTQPLHVIIL…AQEAEGANDP (228 aa). UDP-N-acetyl-alpha-D-glucosamine is bound by residues 10-13, Lys24, Gln76, 81-82, 103-105, Gly138, Glu153, Asn168, and Asn226; these read LAAG, GT, and YGD. Asp105 contributes to the Mg(2+) binding site. Asn226 is a Mg(2+) binding site. The tract at residues 229-249 is linker; it reads WQLSQLERAWQRRAVRALCAQ. The segment at 250–455 is N-acetyltransferase; sequence GARVRDPARL…DGWKRPLKKS (206 aa). Positions 332 and 350 each coordinate UDP-N-acetyl-alpha-D-glucosamine. Residue His362 is the Proton acceptor of the active site. The UDP-N-acetyl-alpha-D-glucosamine site is built by Tyr365 and Asn376. Acetyl-CoA-binding positions include Ala379, 385 to 386, Ser404, Ala422, and Arg439; that span reads NY.

It in the N-terminal section; belongs to the N-acetylglucosamine-1-phosphate uridyltransferase family. In the C-terminal section; belongs to the transferase hexapeptide repeat family. As to quaternary structure, homotrimer. Mg(2+) is required as a cofactor.

The protein resides in the cytoplasm. It carries out the reaction alpha-D-glucosamine 1-phosphate + acetyl-CoA = N-acetyl-alpha-D-glucosamine 1-phosphate + CoA + H(+). It catalyses the reaction N-acetyl-alpha-D-glucosamine 1-phosphate + UTP + H(+) = UDP-N-acetyl-alpha-D-glucosamine + diphosphate. Its pathway is nucleotide-sugar biosynthesis; UDP-N-acetyl-alpha-D-glucosamine biosynthesis; N-acetyl-alpha-D-glucosamine 1-phosphate from alpha-D-glucosamine 6-phosphate (route II): step 2/2. It participates in nucleotide-sugar biosynthesis; UDP-N-acetyl-alpha-D-glucosamine biosynthesis; UDP-N-acetyl-alpha-D-glucosamine from N-acetyl-alpha-D-glucosamine 1-phosphate: step 1/1. The protein operates within bacterial outer membrane biogenesis; LPS lipid A biosynthesis. Catalyzes the last two sequential reactions in the de novo biosynthetic pathway for UDP-N-acetylglucosamine (UDP-GlcNAc). The C-terminal domain catalyzes the transfer of acetyl group from acetyl coenzyme A to glucosamine-1-phosphate (GlcN-1-P) to produce N-acetylglucosamine-1-phosphate (GlcNAc-1-P), which is converted into UDP-GlcNAc by the transfer of uridine 5-monophosphate (from uridine 5-triphosphate), a reaction catalyzed by the N-terminal domain. The polypeptide is Bifunctional protein GlmU (Stenotrophomonas maltophilia (strain R551-3)).